Consider the following 435-residue polypeptide: ATP-dependent RNA helicase SUB2 (435 aa).

The segment at 1–40 (MSHEGQEELLDYSDSEEIAVPTTTAPSAAAGEGANDKEAD) is disordered. The segment covering 7–17 (EELLDYSDSEE) has biased composition (acidic residues). Over residues 19–33 (AVPTTTAPSAAAGEG) the composition is skewed to low complexity. The short motif at 51–79 (TGFRDFLLKPELLRAIGDCGFEHPSEVQQ) is the Q motif element. The Helicase ATP-binding domain maps to 82-257 (IPQSILGTDV…KKFMQNPLEI (176 aa)). An ATP-binding site is contributed by 95-102 (AKSGLGKT). The DECD box signature appears at 204–207 (DECD). One can recognise a Helicase C-terminal domain in the interval 269–430 (GLQQYYIKLD…EFPEEGVDPS (162 aa)).

It belongs to the DEAD box helicase family. DECD subfamily.

It is found in the nucleus. It catalyses the reaction ATP + H2O = ADP + phosphate + H(+). In terms of biological role, ATP-binding RNA helicase involved in transcription elongation and required for the export of mRNA out of the nucleus. SUB2 also plays a role in pre-mRNA splicing and spliceosome assembly. May be involved in rDNA and telomeric silencing, and maintenance of genome integrity. The chain is ATP-dependent RNA helicase SUB2 (SUB2) from Debaryomyces hansenii (strain ATCC 36239 / CBS 767 / BCRC 21394 / JCM 1990 / NBRC 0083 / IGC 2968) (Yeast).